The following is a 53-amino-acid chain: Mannose/glucose-specific lectin alpha 1 chain (53 aa).

It belongs to the leguminous lectin family. Tetramer of two alpha and two beta chains.

This Lathyrus ochrus (Cyprus-vetch) protein is Mannose/glucose-specific lectin alpha 1 chain.